A 417-amino-acid polypeptide reads, in one-letter code: MRTERTSFLLALGLLVSGFCSRVHCLPENVTPEEQHKGTSVDGHSLASSNTDFALSLYKQLALKDPNKNVIFSPLSISIALAFLSLGAHDHTVTEILEGLKFNLTETPETEIHQGFQHLLQTFNQPSNQLQLSVGNAMFASEELKLLDKFRKDAEAFYASEVLSTNFKDSEAAVKLINEYVKNKTHGKIEKLFNDLDVLTNLILLNYIFFKAQWKTPFNPNHTYESEFHVSQNERVIVPMMTLYLETPYFRDEELGCTLVELTYTSNDSALFILPDEGKMQDLEAKLTPETLTRWRSSLQPRLIHRLRLPRFSISSHYQLKDILSQLGIKKIFTSDAGFSGITDDHKLAVSHVIHKAVLDVGEEGTEGAAVTAVVMATSSLLHTLTVSFNRPFLLSIFCKETQSIIFWGKVTNPKEA.

The signal sequence occupies residues 1–25 (MRTERTSFLLALGLLVSGFCSRVHC). Residues N103, N183, N221, and N267 are each glycosylated (N-linked (GlcNAc...) asparagine).

It belongs to the serpin family. As to quaternary structure, homodimer.

The protein localises to the cytoplasmic vesicle. It is found in the secretory vesicle. Its subcellular location is the chromaffin granule. The protein resides in the secreted. Serine protease inhibitor. The protein is Serpin A3-7 of Bos taurus (Bovine).